Consider the following 104-residue polypeptide: Protein S100-A14 (104 aa).

Positions 27-61 (KNFHQYSVEGGKETLTPSELRDLVTQQLPHLMPSN) constitute an EF-hand domain.

This sequence belongs to the S-100 family. As to quaternary structure, homodimer. Interacts with AGER. Expressed at highest levels in colon and at moderate levels in thymus, kidney, liver, small intestine, and lung. Low expression in heart and no expression is seen in brain, skeletal muscle, spleen, placenta and peripheral blood leukocytes.

The protein resides in the cytoplasm. Modulates P53/TP53 protein levels, and thereby plays a role in the regulation of cell survival and apoptosis. Depending on the context, it can promote cell proliferation or apoptosis. Plays a role in the regulation of cell migration by modulating the levels of MMP2, a matrix protease that is under transcriptional control of P53/TP53. Does not bind calcium. The chain is Protein S100-A14 (S100A14) from Homo sapiens (Human).